The chain runs to 609 residues: UvrABC system protein C (609 aa).

The GIY-YIG domain maps to 15 to 92 (TGSGVYQMQD…IKQFRPRYNV (78 aa)). Residues 202 to 237 (DQVIIKLTERMEVASENLVFEEAAHYRDQIRQLRRL) form the UVR domain.

The protein belongs to the UvrC family. Interacts with UvrB in an incision complex.

Its subcellular location is the cytoplasm. Its function is as follows. The UvrABC repair system catalyzes the recognition and processing of DNA lesions. UvrC both incises the 5' and 3' sides of the lesion. The N-terminal half is responsible for the 3' incision and the C-terminal half is responsible for the 5' incision. The polypeptide is UvrABC system protein C (Coxiella burnetii (strain RSA 331 / Henzerling II)).